The following is a 488-amino-acid chain: Homoserine O-acetyltransferase (488 aa).

The AB hydrolase-1 domain occupies 47 to 355 (NAILVCHALT…SYGHDAFLLE (309 aa)). Serine 153 (nucleophile) is an active-site residue. Arginine 222 contributes to the substrate binding site. Residues aspartate 316 and histidine 349 contribute to the active site. A substrate-binding site is contributed by aspartate 350. CBS domains are found at residues 376–433 (MTEK…CSKL) and 437–488 (MTRD…RLIG).

This sequence belongs to the AB hydrolase superfamily. MetX family. In terms of assembly, homodimer.

It localises to the cytoplasm. The catalysed reaction is L-homoserine + acetyl-CoA = O-acetyl-L-homoserine + CoA. Its pathway is amino-acid biosynthesis; L-methionine biosynthesis via de novo pathway; O-acetyl-L-homoserine from L-homoserine: step 1/1. Its function is as follows. Transfers an acetyl group from acetyl-CoA to L-homoserine, forming acetyl-L-homoserine. In Methanococcoides burtonii (strain DSM 6242 / NBRC 107633 / OCM 468 / ACE-M), this protein is Homoserine O-acetyltransferase.